A 432-amino-acid chain; its full sequence is Proline--tRNA ligase (432 aa).

The protein belongs to the class-II aminoacyl-tRNA synthetase family. ProS type 2 subfamily. As to quaternary structure, homodimer.

The protein localises to the cytoplasm. The catalysed reaction is tRNA(Pro) + L-proline + ATP = L-prolyl-tRNA(Pro) + AMP + diphosphate. In terms of biological role, catalyzes the attachment of proline to tRNA(Pro) in a two-step reaction: proline is first activated by ATP to form Pro-AMP and then transferred to the acceptor end of tRNA(Pro). This is Proline--tRNA ligase from Rickettsia prowazekii (strain Madrid E).